A 177-amino-acid polypeptide reads, in one-letter code: Ubiquinol-cytochrome c reductase iron-sulfur subunit (177 aa).

The helical transmembrane segment at Met18 to Val38 threads the bilayer. In terms of domain architecture, Rieske spans Ala88 to Arg175. 4 residues coordinate [2Fe-2S] cluster: Cys120, His122, Cys139, and His142. An intrachain disulfide couples Cys125 to Cys141.

It belongs to the Rieske iron-sulfur protein family. As to quaternary structure, the main subunits of complex b-c1 are: cytochrome b, cytochrome c1 and the Rieske protein. [2Fe-2S] cluster serves as cofactor.

Its subcellular location is the cell membrane. It carries out the reaction a quinol + 2 Fe(III)-[cytochrome c](out) = a quinone + 2 Fe(II)-[cytochrome c](out) + 2 H(+)(out). Component of the ubiquinol-cytochrome c reductase complex (complex III or cytochrome b-c1 complex), which is a respiratory chain that generates an electrochemical potential coupled to ATP synthesis. This Rickettsia conorii (strain ATCC VR-613 / Malish 7) protein is Ubiquinol-cytochrome c reductase iron-sulfur subunit (petA).